Reading from the N-terminus, the 231-residue chain is Uridylate kinase (231 aa).

9-12 (KLSG) is a binding site for ATP. Gly-49 serves as a coordination point for UMP. ATP contacts are provided by Gly-50 and Arg-54. Residues Asp-69 and 130–137 (AGMPYFST) each bind UMP. 3 residues coordinate ATP: Asn-158, Tyr-164, and Asp-167.

The protein belongs to the UMP kinase family. As to quaternary structure, homohexamer.

The protein resides in the cytoplasm. It carries out the reaction UMP + ATP = UDP + ADP. It functions in the pathway pyrimidine metabolism; CTP biosynthesis via de novo pathway; UDP from UMP (UMPK route): step 1/1. With respect to regulation, inhibited by UTP. Its function is as follows. Catalyzes the reversible phosphorylation of UMP to UDP. The polypeptide is Uridylate kinase (Tropheryma whipplei (strain Twist) (Whipple's bacillus)).